A 448-amino-acid chain; its full sequence is Tubulin beta-2 chain (448 aa).

Residues glutamine 11, glutamate 69, serine 138, glycine 142, threonine 143, glycine 144, asparagine 204, and asparagine 226 each contribute to the GTP site. Residue glutamate 69 coordinates Mg(2+). Residues 429–448 (TADEDGYEYEDEEEVGEEDA) are disordered.

The protein belongs to the tubulin family. As to quaternary structure, dimer of alpha and beta chains. A typical microtubule is a hollow water-filled tube with an outer diameter of 25 nm and an inner diameter of 15 nM. Alpha-beta heterodimers associate head-to-tail to form protofilaments running lengthwise along the microtubule wall with the beta-tubulin subunit facing the microtubule plus end conferring a structural polarity. Microtubules usually have 13 protofilaments but different protofilament numbers can be found in some organisms and specialized cells. The cofactor is Mg(2+).

It is found in the cytoplasm. It localises to the cytoskeleton. Functionally, tubulin is the major constituent of microtubules, a cylinder consisting of laterally associated linear protofilaments composed of alpha- and beta-tubulin heterodimers. Microtubules grow by the addition of GTP-tubulin dimers to the microtubule end, where a stabilizing cap forms. Below the cap, tubulin dimers are in GDP-bound state, owing to GTPase activity of alpha-tubulin. The sequence is that of Tubulin beta-2 chain (TUBB2) from Lupinus albus (White lupine).